Consider the following 289-residue polypeptide: Oxaloacetate decarboxylase (289 aa).

S50 contributes to the substrate binding site. D88 contacts Mg(2+). Substrate contacts are provided by R159 and H235.

Belongs to the isocitrate lyase/PEP mutase superfamily. Oxaloacetate decarboxylase family. In terms of assembly, homotetramer; dimer of dimers. Requires Mg(2+) as cofactor.

The enzyme catalyses oxaloacetate + H(+) = pyruvate + CO2. In terms of biological role, catalyzes the decarboxylation of oxaloacetate into pyruvate. Seems to play a role in maintaining cellular concentrations of bicarbonate and pyruvate. The chain is Oxaloacetate decarboxylase from Pseudomonas savastanoi pv. phaseolicola (strain 1448A / Race 6) (Pseudomonas syringae pv. phaseolicola (strain 1448A / Race 6)).